The sequence spans 408 residues: Multidrug resistance protein MdtG (408 aa).

A run of 11 helical transmembrane segments spans residues 16–36 (LIVA…VMPF), 58–78 (IVFS…GGLA), 92–112 (LGMG…QFLI), 115–135 (ALLG…ATQV), 146–166 (TLST…GLLA), 173–193 (PVFF…LLCI), 224–244 (LFVT…ILTL), 253–273 (VGNI…AALL), 290–310 (ILIA…FVQT), 319–339 (FLLG…LVYN), and 378–398 (AVFL…WNSL).

This sequence belongs to the major facilitator superfamily. DHA1 family. MdtG (TC 2.A.1.2.20) subfamily.

Its subcellular location is the cell inner membrane. Its function is as follows. Confers resistance to fosfomycin and deoxycholate. The polypeptide is Multidrug resistance protein MdtG (Escherichia fergusonii (strain ATCC 35469 / DSM 13698 / CCUG 18766 / IAM 14443 / JCM 21226 / LMG 7866 / NBRC 102419 / NCTC 12128 / CDC 0568-73)).